The chain runs to 406 residues: Oligouridylate-binding protein 1 (406 aa).

2 RRM domains span residues Arg-49–Ala-123 and Tyr-134–Lys-212. Residues Thr-231–Asn-250 form a disordered region. Positions Thr-255–Lys-329 constitute an RRM 3 domain.

The protein localises to the nucleus. In terms of biological role, heterogeneous nuclear ribonucleoprotein (hnRNP)-like protein that acts as a component of the pre-mRNA processing machinery. Functions to facilitate the nuclear maturation of plant pre-mRNAs. Binds with high affinity to RNA molecules that contain AU-rich regions. May bind to the 3'-UTR and protects the mRNA against exonucleolytic degradation. Associates with nuclear poly(A)+ RNA in nucleus in vivo. Does not stimulate transcription or the 3' end cleavage/polyadenylation reaction. This Nicotiana plumbaginifolia (Leadwort-leaved tobacco) protein is Oligouridylate-binding protein 1 (UBP1).